Consider the following 719-residue polypeptide: DNA ligase (719 aa).

Residues 42-46 (DAAYD), 92-93 (SL), and Glu-126 contribute to the NAD(+) site. The active-site N6-AMP-lysine intermediate is the Lys-128. NAD(+) is bound by residues Arg-149, Glu-185, Lys-301, and Lys-325. Residues Cys-430, Cys-433, Cys-448, and Cys-454 each coordinate Zn(2+). The BRCT domain maps to 640–719 (ATGSPVEGKT…DDWFKLVGED (80 aa)).

It belongs to the NAD-dependent DNA ligase family. LigA subfamily. Mg(2+) serves as cofactor. It depends on Mn(2+) as a cofactor.

It carries out the reaction NAD(+) + (deoxyribonucleotide)n-3'-hydroxyl + 5'-phospho-(deoxyribonucleotide)m = (deoxyribonucleotide)n+m + AMP + beta-nicotinamide D-nucleotide.. Functionally, DNA ligase that catalyzes the formation of phosphodiester linkages between 5'-phosphoryl and 3'-hydroxyl groups in double-stranded DNA using NAD as a coenzyme and as the energy source for the reaction. It is essential for DNA replication and repair of damaged DNA. The protein is DNA ligase of Brucella suis biovar 1 (strain 1330).